The sequence spans 331 residues: Holliday junction branch migration complex subunit RuvB (331 aa).

The interval M1–Y171 is large ATPase domain (RuvB-L). ATP is bound by residues L9, R10, G51, K54, T55, T56, E118–F120, R161, Y171, and R208. Position 55 (T55) interacts with Mg(2+). The segment at T172–G242 is small ATPAse domain (RuvB-S). The head domain (RuvB-H) stretch occupies residues T245–N331. The DNA site is built by R300 and R305.

The protein belongs to the RuvB family. In terms of assembly, homohexamer. Forms an RuvA(8)-RuvB(12)-Holliday junction (HJ) complex. HJ DNA is sandwiched between 2 RuvA tetramers; dsDNA enters through RuvA and exits via RuvB. An RuvB hexamer assembles on each DNA strand where it exits the tetramer. Each RuvB hexamer is contacted by two RuvA subunits (via domain III) on 2 adjacent RuvB subunits; this complex drives branch migration. In the full resolvosome a probable DNA-RuvA(4)-RuvB(12)-RuvC(2) complex forms which resolves the HJ.

The protein localises to the cytoplasm. It carries out the reaction ATP + H2O = ADP + phosphate + H(+). The RuvA-RuvB-RuvC complex processes Holliday junction (HJ) DNA during genetic recombination and DNA repair, while the RuvA-RuvB complex plays an important role in the rescue of blocked DNA replication forks via replication fork reversal (RFR). RuvA specifically binds to HJ cruciform DNA, conferring on it an open structure. The RuvB hexamer acts as an ATP-dependent pump, pulling dsDNA into and through the RuvAB complex. RuvB forms 2 homohexamers on either side of HJ DNA bound by 1 or 2 RuvA tetramers; 4 subunits per hexamer contact DNA at a time. Coordinated motions by a converter formed by DNA-disengaged RuvB subunits stimulates ATP hydrolysis and nucleotide exchange. Immobilization of the converter enables RuvB to convert the ATP-contained energy into a lever motion, pulling 2 nucleotides of DNA out of the RuvA tetramer per ATP hydrolyzed, thus driving DNA branch migration. The RuvB motors rotate together with the DNA substrate, which together with the progressing nucleotide cycle form the mechanistic basis for DNA recombination by continuous HJ branch migration. Branch migration allows RuvC to scan DNA until it finds its consensus sequence, where it cleaves and resolves cruciform DNA. In Deinococcus geothermalis (strain DSM 11300 / CIP 105573 / AG-3a), this protein is Holliday junction branch migration complex subunit RuvB.